The primary structure comprises 370 residues: tRNA-specific 2-thiouridylase MnmA (370 aa).

ATP contacts are provided by residues 20–27 (GMSGGVDS) and Met-46. The interval 106 to 108 (NPD) is interaction with target base in tRNA. The active-site Nucleophile is Cys-111. An intrachain disulfide couples Cys-111 to Cys-207. Gly-135 is a binding site for ATP. Positions 157–159 (KDQ) are interaction with tRNA. Cys-207 serves as the catalytic Cysteine persulfide intermediate. Residues 318 to 319 (RY) form an interaction with tRNA region.

Belongs to the MnmA/TRMU family.

It localises to the cytoplasm. The catalysed reaction is S-sulfanyl-L-cysteinyl-[protein] + uridine(34) in tRNA + AH2 + ATP = 2-thiouridine(34) in tRNA + L-cysteinyl-[protein] + A + AMP + diphosphate + H(+). Its function is as follows. Catalyzes the 2-thiolation of uridine at the wobble position (U34) of tRNA, leading to the formation of s(2)U34. This chain is tRNA-specific 2-thiouridylase MnmA, found in Polynucleobacter asymbioticus (strain DSM 18221 / CIP 109841 / QLW-P1DMWA-1) (Polynucleobacter necessarius subsp. asymbioticus).